Here is a 240-residue protein sequence, read N- to C-terminus: tRNA (guanine-N(1)-)-methyltransferase (240 aa).

S-adenosyl-L-methionine is bound by residues G111 and 130–135; that span reads IGDYVI.

The protein belongs to the RNA methyltransferase TrmD family. Homodimer.

The protein resides in the cytoplasm. It catalyses the reaction guanosine(37) in tRNA + S-adenosyl-L-methionine = N(1)-methylguanosine(37) in tRNA + S-adenosyl-L-homocysteine + H(+). In terms of biological role, specifically methylates guanosine-37 in various tRNAs. The sequence is that of tRNA (guanine-N(1)-)-methyltransferase from Mycoplasma capricolum subsp. capricolum (strain California kid / ATCC 27343 / NCTC 10154).